A 718-amino-acid polypeptide reads, in one-letter code: Serine/threonine-protein kinase PAK 5 (718 aa).

Disordered regions lie at residues 1 to 29 (MFGK…DPQE), 96 to 119 (RSNS…IQGH), 226 to 245 (SPLD…TSRC), 264 to 296 (YDRR…QEPM), and 339 to 371 (VFSP…SSSH). A CRIB domain is found at 11-24 (ISGPSNFEHRVHTG). The interval 25–447 (FDPQEQKFTG…VVSPGDPREY (423 aa)) is linker. Ser104 bears the Phosphoserine mark. Phosphothreonine is present on Thr107. Over residues 226–244 (SPLDYSFQLTPSRTAGTSR) the composition is skewed to polar residues. The span at 359-371 (QSQSKVGYSSSSH) shows a compositional bias: low complexity. Positions 448 to 699 (LDNFIKIGEG…AQELLGHPFL (252 aa)) constitute a Protein kinase domain. Residues 454–462 (IGEGSTGIV) and Lys477 contribute to the ATP site. The active-site Proton acceptor is the Asp567.

The protein belongs to the protein kinase superfamily. STE Ser/Thr protein kinase family. STE20 subfamily. Interacts tightly with GTP-bound but not GDP-bound CDC42/p21 and RAC1. Interacts with MARK2, leading to inhibit MARK2 independently of kinase activity. Interacts with RHOD and RHOH. Autophosphorylated when activated by CDC42/p21.

It localises to the mitochondrion. The protein resides in the cytoplasm. It is found in the nucleus. It catalyses the reaction L-seryl-[protein] + ATP = O-phospho-L-seryl-[protein] + ADP + H(+). The enzyme catalyses L-threonyl-[protein] + ATP = O-phospho-L-threonyl-[protein] + ADP + H(+). In terms of biological role, serine/threonine protein kinase that plays a role in a variety of different signaling pathways including cytoskeleton regulation, cell migration, proliferation or cell survival. Activation by various effectors including growth factor receptors or active CDC42 and RAC1 results in a conformational change and a subsequent autophosphorylation on several serine and/or threonine residues. Phosphorylates the proto-oncogene RAF and stimulates its kinase activity. Promotes cell survival by phosphorylating the BCL2 antagonist of cell death BAD. Phosphorylates CTNND1, probably to regulate cytoskeletal organization and cell morphology. Keeps microtubules stable through MARK2 inhibition and destabilizes the F-actin network leading to the disappearance of stress fibers and focal adhesions. The protein is Serine/threonine-protein kinase PAK 5 (Pak5) of Rattus norvegicus (Rat).